A 288-amino-acid chain; its full sequence is Protease HtpX homolog (288 aa).

Transmembrane regions (helical) follow at residues 1–21 (MHTI…LLAG) and 23–43 (IIGG…MNFF). Histidine 130 is a binding site for Zn(2+). Glutamate 131 is an active-site residue. Histidine 134 serves as a coordination point for Zn(2+). Helical transmembrane passes span 140–160 (ILIS…AEMA) and 175–195 (IGGL…AMII). Glutamate 204 serves as a coordination point for Zn(2+).

It belongs to the peptidase M48B family. Zn(2+) is required as a cofactor.

The protein localises to the cell inner membrane. The protein is Protease HtpX homolog of Persephonella marina (strain DSM 14350 / EX-H1).